The sequence spans 262 residues: Octopine permease ATP-binding protein P (262 aa).

Residues 9–254 form the ABC transporter domain; that stretch reads VKLTGIRKNF…PRTERFRQFL (246 aa). An ATP-binding site is contributed by 41–48; it reads GSSGSGKS.

The protein belongs to the ABC transporter superfamily.

Its subcellular location is the cell inner membrane. Component of the octopine active transport system probably consisting of four subunits: Q, M, P and T. This chain is Octopine permease ATP-binding protein P (occP), found in Rhizobium meliloti (Ensifer meliloti).